Here is a 68-residue protein sequence, read N- to C-terminus: MNYVSIFVLIVACLCVLADAQLTFTSSWGGGKRGAVAATMSCRSEETIAAIYKLIQNEAERLLLCQKP.

The signal sequence occupies residues 1–20; it reads MNYVSIFVLIVACLCVLADA. A Pyrrolidone carboxylic acid modification is found at glutamine 21. The residue at position 30 (glycine 30) is a Glycine amide. Residues 34 to 68 constitute a propeptide that is removed on maturation; that stretch reads GAVAATMSCRSEETIAAIYKLIQNEAERLLLCQKP.

As to expression, expressed in antennal lobe (AL), corpora cardiaca (CC), corpora allata (CA) and gnathal ganglion (GNG) (at protein level). Expression in CC and CA detected in all animals, expression in GNG in some animals and in AL in few animals (at protein level).

Its subcellular location is the secreted. Its function is as follows. This hormone, released from cells in the corpora cardiaca, causes release of diglycerides from the fat body and stimulation of muscles to use these diglycerides as an energy source during energy-demanding processes. This is Adipokinetic prohormone type 1 from Agrotis ipsilon (Black cutworm moth).